The sequence spans 697 residues: Probable translocation protein y4yR (697 aa).

Transmembrane regions (helical) follow at residues 20–40, 42–62, 67–87, 107–127, 200–220, 235–255, 293–313, and 372–392; these read VALMLLLAVSMMVMPIPVMAV, ALIGFNMGLAVLLLMAALYVS, FSSLPGVILLSTVFRLALTVA, SFVISGNIVVGFVIFLVVTMV, SIAGLVVICINMLGGISIGLL, LLTIGDALISQIPALLLSITA, VAMGFVPGFPLPVFFMLAAVF, and IARISQLVSADLGIIVPPIPV. The segment at 675–697 is disordered; it reads IRLPPSNGTSGEPRSIRPSATTG. Residues 680-697 show a composition bias toward polar residues; it reads SNGTSGEPRSIRPSATTG.

The protein belongs to the FHIPEP (flagella/HR/invasion proteins export pore) family.

Its subcellular location is the cell inner membrane. In terms of biological role, could be involved in the secretion of an unknown factor. The chain is Probable translocation protein y4yR from Sinorhizobium fredii (strain NBRC 101917 / NGR234).